A 44-amino-acid polypeptide reads, in one-letter code: Relaxin (44 aa).

The residue at position 1 (Gln1) is a Pyrrolidone carboxylic acid. 3 cysteine pairs are disulfide-bonded: Cys3–Cys31, Cys15–Cys44, and Cys30–Cys35.

The protein belongs to the insulin family. In terms of assembly, heterodimer of a B chain and an A chain linked by two disulfide bonds.

It localises to the secreted. The chain is Relaxin from Carcharias taurus (Sand tiger shark).